The sequence spans 161 residues: Insulin-like growth factor 1, juvenile form (161 aa).

The interval 45–73 (GPETLCGAELVDTLQFVCGDRGFYFSKPT) is b. Intrachain disulfides connect Cys-50–Cys-92, Cys-62–Cys-105, and Cys-91–Cys-96. Residues 74-85 (GYGPSSRRSHNR) are c. Residues 86–106 (GIVDECCFQSCELRRLEMYCA) are a. The d stretch occupies residues 107–114 (PVKPGKTP). The tract at residues 111–161 (GKTPRSVRAQRHTDSPRTAKKPLPGQSHSSYKEVHQKNSSRGNTGGRNYRI) is disordered. A propeptide spans 115 to 161 (RSVRAQRHTDSPRTAKKPLPGQSHSSYKEVHQKNSSRGNTGGRNYRI) (e peptide).

It belongs to the insulin family.

The protein resides in the secreted. The insulin-like growth factors, isolated from plasma, are structurally and functionally related to insulin but have a much higher growth-promoting activity. Acts as a ligand for IGF1R. Binds to the alpha subunit of IGF1R, leading to the activation of the intrinsic tyrosine kinase activity which autophosphorylates tyrosine residues in the beta subunit thus initiatiating a cascade of down-stream signaling events leading to activation of the PI3K-AKT/PKB and the Ras-MAPK pathways. Binds to integrins. Its binding to integrins and subsequent ternary complex formation with integrins and IGFR1 are essential for IGF1 signaling. This is Insulin-like growth factor 1, juvenile form from Cyprinus carpio (Common carp).